The primary structure comprises 206 residues: Large ribosomal subunit protein uL4 (206 aa).

The segment at 47–71 (TRAQKGRSEVAGSTRKQWRQKGTGR) is disordered.

This sequence belongs to the universal ribosomal protein uL4 family. In terms of assembly, part of the 50S ribosomal subunit.

Its function is as follows. One of the primary rRNA binding proteins, this protein initially binds near the 5'-end of the 23S rRNA. It is important during the early stages of 50S assembly. It makes multiple contacts with different domains of the 23S rRNA in the assembled 50S subunit and ribosome. Functionally, forms part of the polypeptide exit tunnel. The sequence is that of Large ribosomal subunit protein uL4 from Nitrosomonas eutropha (strain DSM 101675 / C91 / Nm57).